The primary structure comprises 445 residues: GTPase Der (445 aa).

2 EngA-type G domains span residues 3–167 (PVIA…YAGQ) and 180–353 (VKIA…AAAM). Residues 9 to 16 (GRPNVGKS), 56 to 60 (DTGGF), 119 to 122 (NKAE), 186 to 193 (GRPNVGKS), 233 to 237 (DTAGL), and 298 to 301 (NKWD) each bind GTP. The KH-like domain occupies 354 to 438 (AKLPTPKLTR…PLRIEFRSST (85 aa)).

Belongs to the TRAFAC class TrmE-Era-EngA-EngB-Septin-like GTPase superfamily. EngA (Der) GTPase family. As to quaternary structure, associates with the 50S ribosomal subunit.

In terms of biological role, GTPase that plays an essential role in the late steps of ribosome biogenesis. In Paraburkholderia phytofirmans (strain DSM 17436 / LMG 22146 / PsJN) (Burkholderia phytofirmans), this protein is GTPase Der.